Reading from the N-terminus, the 231-residue chain is Orotidine 5'-phosphate decarboxylase (231 aa).

Substrate-binding positions include Asp11, Lys32, Asp59 to Thr68, Thr118, Arg180, Gln189, Gly209, and Arg210. Lys61 serves as the catalytic Proton donor.

Belongs to the OMP decarboxylase family. Type 1 subfamily. As to quaternary structure, homodimer.

The enzyme catalyses orotidine 5'-phosphate + H(+) = UMP + CO2. The protein operates within pyrimidine metabolism; UMP biosynthesis via de novo pathway; UMP from orotate: step 2/2. In terms of biological role, catalyzes the decarboxylation of orotidine 5'-monophosphate (OMP) to uridine 5'-monophosphate (UMP). The chain is Orotidine 5'-phosphate decarboxylase from Synechocystis sp. (strain ATCC 27184 / PCC 6803 / Kazusa).